The sequence spans 278 residues: Expansin-B17 (278 aa).

The N-terminal stretch at methionine 1–alanine 26 is a signal peptide. Positions glycine 66–lysine 176 constitute an Expansin-like EG45 domain. 3 disulfide bridges follow: cysteine 69–cysteine 98, cysteine 101–cysteine 171, and cysteine 106–cysteine 112. The 82-residue stretch at phenylalanine 189–serine 270 folds into the Expansin-like CBD domain.

The protein belongs to the expansin family. Expansin B subfamily.

It is found in the secreted. The protein localises to the cell wall. Its subcellular location is the membrane. May cause loosening and extension of plant cell walls by disrupting non-covalent bonding between cellulose microfibrils and matrix glucans. No enzymatic activity has been found. May be required for rapid internodal elongation in deepwater rice during submergence. The polypeptide is Expansin-B17 (EXPB17) (Oryza sativa subsp. japonica (Rice)).